A 469-amino-acid chain; its full sequence is Trigger factor (469 aa).

Residues 165–250 (GDRVTIDYIG…VKAVCKSDEL (86 aa)) form the PPIase FKBP-type domain. Basic and acidic residues predominate over residues 444–460 (DLTEKKPLKKKTAEKVS). The disordered stretch occupies residues 444-469 (DLTEKKPLKKKTAEKVSTKKKAPKKS).

The protein belongs to the FKBP-type PPIase family. Tig subfamily.

The protein resides in the cytoplasm. The catalysed reaction is [protein]-peptidylproline (omega=180) = [protein]-peptidylproline (omega=0). Functionally, involved in protein export. Acts as a chaperone by maintaining the newly synthesized protein in an open conformation. Functions as a peptidyl-prolyl cis-trans isomerase. This chain is Trigger factor, found in Bartonella henselae (strain ATCC 49882 / DSM 28221 / CCUG 30454 / Houston 1) (Rochalimaea henselae).